We begin with the raw amino-acid sequence, 2602 residues long: Filamin-B (2602 aa).

The segment at 1–239 is actin-binding; it reads MPVTEKDLAE…VMTYLSQFPK (239 aa). Calponin-homology (CH) domains lie at 16-122 and 139-242; these read KIQQ…LHYS and QTPK…KAKL. Thr-216 carries the phosphothreonine modification. The segment at 244–267 is disordered; it reads PGAPLKPKLNPKKARAYGRGIEPT. Filamin repeat units lie at residues 249–347, 349–446, 447–543, 544–636, 640–736, 737–839, 840–938, 939–1034, 1035–1127, 1128–1222, 1223–1322, 1323–1415, 1416–1511, 1512–1608, and 1609–1704; these read KPKL…EVNV, KAQG…GVQI, GEAC…EVQV, GPEA…MAFI, TGDY…RVNI, GQGS…RVKV, DPSH…TVGV, AAPL…TVEA, SLPP…KADI, EMPF…WVKV, EPAI…KVAV, TEGC…RVPS, KDVV…KVKV, LPTY…RIRA, and TQTG…TVMA. Thr-519 carries the phosphothreonine modification. An N6-acetyllysine modification is found at Lys-681. Ser-730 carries the post-translational modification Phosphoserine. A compositionally biased stretch (basic and acidic residues) spans 837-850; that stretch reads VKVDPSHDASKVKA. A disordered region spans residues 837-862; sequence VKVDPSHDASKVKAEGPGLSKAGVEN. Phosphoserine occurs at positions 886, 932, 983, and 1028. A Phosphothreonine modification is found at Thr-1307. Ser-1316 carries the phosphoserine modification. Ser-1433, Ser-1505, and Ser-1602 each carry phosphoserine. The segment at 1705-1728 is hinge 1; sequence TDGEVTAMEEAPVNACPPGFRPWV. Filamin repeat units follow at residues 1729–1813, 1816–1908, 1919–1994, 1997–2089, 2091–2185, 2188–2280, 2282–2375, and 2379–2471; these read TEEA…SPLQ, VNYP…TAKI, KLGS…SIMV, SEIG…TVKI, GEGR…QFTV, LGEG…LVPV, APSD…KVRV, and GQAG…KAKV. Lys-1780 carries the N6-acetyllysine modification. 2 positions are modified to phosphoserine: Ser-2083 and Ser-2113. Residues Ser-2369 and Ser-2465 each carry the phosphoserine modification. Lys-2468 is covalently cross-linked (Glycyl lysine isopeptide (Lys-Gly) (interchain with G-Cter in ISG15)). Residues 2472–2506 form a hinge 2 region; sequence TGQRLVSPGSANETSSILVESVTRSSTETCYSAIP. The self-association site, tail stretch occupies residues 2472–2602; sequence TGQRLVSPGS…PGSPFHVTVP (131 aa). Phosphoserine is present on residues Ser-2478, Ser-2481, and Ser-2492. The Filamin 24 repeat unit spans residues 2507–2601; it reads KSSSDASKVT…IPGSPFHVTV (95 aa). 2 positions are modified to N6-succinyllysine: Lys-2518 and Lys-2524. Lys-2576 carries the post-translational modification N6-acetyllysine.

The protein belongs to the filamin family. Homodimer. Interacts with FLNA, FLNC, INPPL1, ITGB1A, ITGB1D, ITGB3, ITGB6, MYOT, MYOZ1, PSEN1 and PSEN2. Interacts with MICALL2. Interacts with RFLNA and RFLNB. Interacts with ASB2 isoform 1; the interaction targets FLNB for proteasomal degradation. Post-translationally, ISGylation prevents ability to interact with the upstream activators of the JNK cascade and inhibits IFNA-induced JNK signaling. In terms of processing, ubiquitination by a SCF-like complex containing ASB2 isoform 1 leads to proteasomal degradation which promotes muscle differentiation. Expressed in hippocampus, cortex, cerebellar Purkinje cells and granule cell layers.

Its subcellular location is the cytoplasm. The protein resides in the cell cortex. It is found in the cytoskeleton. The protein localises to the stress fiber. It localises to the myofibril. Its subcellular location is the sarcomere. The protein resides in the z line. Functionally, connects cell membrane constituents to the actin cytoskeleton. May promote orthogonal branching of actin filaments and links actin filaments to membrane glycoproteins. Anchors various transmembrane proteins to the actin cytoskeleton. This Mus musculus (Mouse) protein is Filamin-B (Flnb).